A 148-amino-acid polypeptide reads, in one-letter code: D-aminoacyl-tRNA deacylase (148 aa).

A Gly-cisPro motif, important for rejection of L-amino acids motif is present at residues 137-138 (GP).

This sequence belongs to the DTD family. In terms of assembly, homodimer.

It localises to the cytoplasm. The catalysed reaction is glycyl-tRNA(Ala) + H2O = tRNA(Ala) + glycine + H(+). It carries out the reaction a D-aminoacyl-tRNA + H2O = a tRNA + a D-alpha-amino acid + H(+). In terms of biological role, an aminoacyl-tRNA editing enzyme that deacylates mischarged D-aminoacyl-tRNAs. Also deacylates mischarged glycyl-tRNA(Ala), protecting cells against glycine mischarging by AlaRS. Acts via tRNA-based rather than protein-based catalysis; rejects L-amino acids rather than detecting D-amino acids in the active site. By recycling D-aminoacyl-tRNA to D-amino acids and free tRNA molecules, this enzyme counteracts the toxicity associated with the formation of D-aminoacyl-tRNA entities in vivo and helps enforce protein L-homochirality. This Aquifex aeolicus (strain VF5) protein is D-aminoacyl-tRNA deacylase.